A 1061-amino-acid chain; its full sequence is Transcription termination factor 2 (1061 aa).

Disordered stretches follow at residues 1-163 (MSSE…TAEA) and 212-253 (ILSS…VKTS). Low complexity predominate over residues 32 to 46 (LSKSSRLSKSSRPSS). 2 positions are modified to phosphoserine: S108 and S110. Acidic residues predominate over residues 138–152 (LSDDDSEIEYSDEVQ). S214 and S215 each carry phosphoserine. Position 216 is a phosphothreonine (T216). Residues 237–253 (KSLSPRSSAGASVVKTS) are compositionally biased toward polar residues. Positions 452–652 (WRERKLPRGG…YALLKFLRCS (201 aa)) constitute a Helicase ATP-binding domain. 465 to 472 (DDMGLGKT) provides a ligand contact to ATP. Residues 485–523 (GQEMSEGKDESSDSDSEDDKNKKRKSVTGWKSKGRKDTR) form a disordered region. Residues 506-522 (KKRKSVTGWKSKGRKDT) are compositionally biased toward basic residues. The DEAH box motif lies at 603–606 (DEAH). The 166-residue stretch at 891–1056 (KINMVIQILK…SSKLTIDDLK (166 aa)) folds into the Helicase C-terminal domain.

It belongs to the SNF2/RAD54 helicase family.

The protein resides in the nucleus. Its function is as follows. DsDNA-dependent ATPase which acts as a transcription termination factor by coupling ATP hydrolysis with removal of RNA polymerase II from the DNA template. In Drosophila melanogaster (Fruit fly), this protein is Transcription termination factor 2 (lds).